A 265-amino-acid chain; its full sequence is MSPNSSGLAVRVIPCLDVDDGRVVKGVNFENLRDAGDPVELAAVYDAEGADELTFLDVTASSSGRATMLDVVRRTAEQVFIPLTVGGGVRTVADVDVLLRAGADKVSVNTAAIARPELLEEMARQFGSQCIVLSVDARTVPPGAVPTPSGWEVTTHGGRRGTGIDAVEWASRGADLGVGEILLNSMDADGTKAGFDLEMLQAVRSAVTVPVIASGGAGAAEHFAPAIEAGADAVLAASVFHFRELTIGQVKAAMAEAGIPVRMVR.

Catalysis depends on residues D17 and D136.

It belongs to the HisA/HisF family. Heterodimer of HisH and HisF.

The protein localises to the cytoplasm. The enzyme catalyses 5-[(5-phospho-1-deoxy-D-ribulos-1-ylimino)methylamino]-1-(5-phospho-beta-D-ribosyl)imidazole-4-carboxamide + L-glutamine = D-erythro-1-(imidazol-4-yl)glycerol 3-phosphate + 5-amino-1-(5-phospho-beta-D-ribosyl)imidazole-4-carboxamide + L-glutamate + H(+). It functions in the pathway amino-acid biosynthesis; L-histidine biosynthesis; L-histidine from 5-phospho-alpha-D-ribose 1-diphosphate: step 5/9. Functionally, IGPS catalyzes the conversion of PRFAR and glutamine to IGP, AICAR and glutamate. The HisF subunit catalyzes the cyclization activity that produces IGP and AICAR from PRFAR using the ammonia provided by the HisH subunit. The chain is Imidazole glycerol phosphate synthase subunit HisF from Mycobacterium avium (strain 104).